The primary structure comprises 523 residues: MTQNKLKLCSKANVYTEVPDGGWGWAVAVSFFFVEVFTYGIIKTFGVFFNDLMDSFNESNSRISWIISICVFVLTFSAPLATVLSNRFGHRLVVMLGGLLVSTGMVAASFSQEVSHMYVAIGIISGLGYCFSFLPTVTILSQYFGKRRSIVTAVASTGECFAVFAFAPAIMALKERIGWRYSLLFVGLLQLNIVIFGALLRPIFIRGPASPKIVIQENRKEAQYMLENEKTRTSIDSIDSGVELTTSPKNVPTHTNLELEPKADMQQVLVKTSPRPSEKKAPLLDFSILKEKSFICYALFGLFATLGFFAPSLYIIPLGISLGIDQDRAAFLLSTMAIAEVFGRIGAGFVLNREPIRKIYIELICVILLTVSLFAFTFATEFWGLMSCSIFFGFMVGTIGGTHIPLLAEDDVVGIEKMSSAAGVYIFIQSIAGLAGPPLAGLLVDQSKIYSRAFYSCAAGMALAAVCLALVRPCKMGLCQHHHSGETKVVSHRGKTLQDIPEDFLEMDLAKNEHRVHVQMEPV.

At 1–21 (MTQNKLKLCSKANVYTEVPDG) the chain is on the cytoplasmic side. A helical transmembrane segment spans residues 22-42 (GWGWAVAVSFFFVEVFTYGII). Residues 43-62 (KTFGVFFNDLMDSFNESNSR) are Extracellular-facing. Residues 63-83 (ISWIISICVFVLTFSAPLATV) form a helical membrane-spanning segment. Topologically, residues 84–91 (LSNRFGHR) are cytoplasmic. Residues 92–112 (LVVMLGGLLVSTGMVAASFSQ) form a helical membrane-spanning segment. At 113 to 118 (EVSHMY) the chain is on the extracellular side. Residues 119 to 139 (VAIGIISGLGYCFSFLPTVTI) traverse the membrane as a helical segment. Residues 140–149 (LSQYFGKRRS) lie on the Cytoplasmic side of the membrane. A helical transmembrane segment spans residues 150-170 (IVTAVASTGECFAVFAFAPAI). Residues 171 to 184 (MALKERIGWRYSLL) are Extracellular-facing. A helical transmembrane segment spans residues 185–205 (FVGLLQLNIVIFGALLRPIFI). Topologically, residues 206–299 (RGPASPKIVI…KEKSFICYAL (94 aa)) are cytoplasmic. A phosphoserine mark is found at Ser-234, Ser-237, Ser-240, and Ser-247. A helical transmembrane segment spans residues 300–320 (FGLFATLGFFAPSLYIIPLGI). At 321–330 (SLGIDQDRAA) the chain is on the extracellular side. The helical transmembrane segment at 331–351 (FLLSTMAIAEVFGRIGAGFVL) threads the bilayer. Residues 352 to 358 (NREPIRK) are Cytoplasmic-facing. Residues 359 to 379 (IYIELICVILLTVSLFAFTFA) form a helical membrane-spanning segment. Residues 380–381 (TE) are Extracellular-facing. A helical transmembrane segment spans residues 382 to 402 (FWGLMSCSIFFGFMVGTIGGT). The Cytoplasmic segment spans residues 403 to 423 (HIPLLAEDDVVGIEKMSSAAG). A helical membrane pass occupies residues 424–444 (VYIFIQSIAGLAGPPLAGLLV). Residues 445-452 (DQSKIYSR) lie on the Extracellular side of the membrane. A helical membrane pass occupies residues 453 to 473 (AFYSCAAGMALAAVCLALVRP). Residues 474–523 (CKMGLCQHHHSGETKVVSHRGKTLQDIPEDFLEMDLAKNEHRVHVQMEPV) are Cytoplasmic-facing.

This sequence belongs to the major facilitator superfamily. Monocarboxylate porter (TC 2.A.1.13) family. In terms of assembly, forms functional complexes with BSG/CD147 or EMB/GP70 ancillary proteins.

It is found in the basolateral cell membrane. It catalyses the reaction taurine(out) = taurine(in). Monocarboxylate transporter selective for taurine. May associate with BSG/CD147 or EMB/GP70 ancillary proteins to mediate facilitative efflux or influx of taurine across the plasma membrane. The transport is pH- and sodium-independent. Rather low-affinity, is likely effective for taurine transport in tissues where taurine is present at high concentrations. The chain is Monocarboxylate transporter 7 from Homo sapiens (Human).